The following is a 529-amino-acid chain: MTNLVPVGRALLSVSDKSGLLDLARALADLEVELISTGGTAAALRAAGLKVRDVAEVTGFPEMMDGRVKTLHPMVHGGLLALRDDDEHLVAMAAHGIEPIDLLVVNLYPFEAAVARGASYDDCIENIDIGGPAMIRAAAKNHRFVNVVTDTADYKALLDELRAHDGATRLSFRQKLALTAYARTAAYDTAVSTWMAGALKAEAPRRRSFAGTLAQTMRYGENPHQKAAFYTDGSARPGVATAKQWQGKELSYNNINDTDAAFELVAEFDPAEGPACVIVKHANPCGVARGATLAEAYARAFDCDRVSAFGGIIALNQPLDAATAEKITEIFTEVVIAPGADEEARAIFAAKKNLRLLTTEALPDPLAPGLAFKQVAGGFLVQDRDAGHVDALDLKVVTKRAPSDAELADLLFAWTVAKHVKSNAIVYVKDGATVGVGAGQMSRVDSTRIAARKSQDMAQALGLAQPLTQGSVVASDAFFPFADGLLAAAEAGATAIIQPGGSMRDDEVIAAADEAGLAMVFTGQRHFRH.

Residues 2-149 enclose the MGS-like domain; the sequence is TNLVPVGRAL…KNHRFVNVVT (148 aa).

Belongs to the PurH family.

It carries out the reaction (6R)-10-formyltetrahydrofolate + 5-amino-1-(5-phospho-beta-D-ribosyl)imidazole-4-carboxamide = 5-formamido-1-(5-phospho-D-ribosyl)imidazole-4-carboxamide + (6S)-5,6,7,8-tetrahydrofolate. The enzyme catalyses IMP + H2O = 5-formamido-1-(5-phospho-D-ribosyl)imidazole-4-carboxamide. It participates in purine metabolism; IMP biosynthesis via de novo pathway; 5-formamido-1-(5-phospho-D-ribosyl)imidazole-4-carboxamide from 5-amino-1-(5-phospho-D-ribosyl)imidazole-4-carboxamide (10-formyl THF route): step 1/1. The protein operates within purine metabolism; IMP biosynthesis via de novo pathway; IMP from 5-formamido-1-(5-phospho-D-ribosyl)imidazole-4-carboxamide: step 1/1. This chain is Bifunctional purine biosynthesis protein PurH, found in Cereibacter sphaeroides (strain ATCC 17029 / ATH 2.4.9) (Rhodobacter sphaeroides).